The primary structure comprises 215 residues: Large ribosomal subunit protein bL25 (215 aa).

The tract at residues 170–215 (DPDTSVASVTPPTTEEDLDTDDVDENAEPELVGAENDSADEESENK) is disordered. 2 stretches are compositionally biased toward acidic residues: residues 183–197 (TEEDLDTDDVDENAE) and 206–215 (DSADEESENK).

This sequence belongs to the bacterial ribosomal protein bL25 family. CTC subfamily. As to quaternary structure, part of the 50S ribosomal subunit; part of the 5S rRNA/L5/L18/L25 subcomplex. Contacts the 5S rRNA. Binds to the 5S rRNA independently of L5 and L18.

Functionally, this is one of the proteins that binds to the 5S RNA in the ribosome where it forms part of the central protuberance. This is Large ribosomal subunit protein bL25 from Oceanobacillus iheyensis (strain DSM 14371 / CIP 107618 / JCM 11309 / KCTC 3954 / HTE831).